The primary structure comprises 266 residues: Sec-independent protein translocase protein TatC (266 aa).

6 helical membrane passes run 28–48 (MIIATIILMNNKNVIFDYILF), 93–113 (FNIYVWTCFIGGFILSFPYIF), 134–154 (GIIMMVTFLFILGVLFGYFIL), 183–203 (LIMHSILSMGITFLFPIFIYF), 221–241 (HAFLILLILASAITPGDIFST), and 242–262 (IVVLIPLMILYQFSIYISFYV).

It belongs to the TatC family. In terms of assembly, forms a complex with TatA.

The protein resides in the cell inner membrane. Its function is as follows. Part of the twin-arginine translocation (Tat) system that transports large folded proteins containing a characteristic twin-arginine motif in their signal peptide across membranes. In Blattabacterium sp. subsp. Periplaneta americana (strain BPLAN) (Periplaneta americana symbiotic bacterium), this protein is Sec-independent protein translocase protein TatC.